A 1047-amino-acid chain; its full sequence is Jouberin (1047 aa).

Composition is skewed to basic and acidic residues over residues 1–17 (MEQETPEKVDSAQEKVR) and 77–86 (LLHDDKLGSE). Disordered regions lie at residues 1–44 (MEQE…LTEA) and 67–185 (EQLT…SPVH). The interval 1–285 (MEQETPEKVD…IFNENFPYLL (285 aa)) is interaction with HAP1. A compositionally biased stretch (basic residues) spans 87–96 (KRKKKKKKKV). Over residues 116–132 (GEQKKEGAPEGSHHREG) the composition is skewed to basic and acidic residues. Positions 150 to 160 (PKPKKMKKKPK) are enriched in basic residues. Residues 173–185 (GVHEITGRDSPVH) show a composition bias toward basic and acidic residues. WD repeat units lie at residues 458–500 (AGER…FMRE), 503–542 (GHLNIIYDLDWSKDDRYLVTSSSDGTARVWKNEINSTSTF), 546–586 (PHPS…DAAI), 593–632 (VHKSFVNSICFDDEGHHMYSGDCIGVIAVWDTYVKVTDVQ), 649–688 (FRGVPVSYLEVHPNGKRLLIHTKDSTLRIMDLRILAARKF), 692–731 (ANYREKIHSTLTPCGTLLFSGSEDGIVYVWNPETGEQVAM), and 736–777 (PFKS…AQQE). Ser-854 bears the Phosphoserine mark. Residues 903 to 963 (DPPPMVVALY…PANHVASETL (61 aa)) enclose the SH3 domain. Basic and acidic residues-rich tracts occupy residues 964-1003 (YRDSPPKVKERSPPLTPKEKAKMEKPPASRKSLIKDRFLD) and 1012-1040 (GHSEKGRDQNFEERGHKSDMEMKKSEPTV). The segment at 964–1047 (YRDSPPKVKE…PTVRKVTLIE (84 aa)) is disordered. Position 975 is a phosphoserine (Ser-975).

In terms of assembly, self-associates. Part of the tectonic-like complex (also named B9 complex). Interacts with MKS1. Interacts with NPHP1; probably as heterodimers and/or AHI1(2):NPHP1(2) heterotetramers. Interacts (via SH3 domain) with the dynamin GTPase DNM2. Interacts with HAP1; probably as AHI1(2):HAP1(2) heterotetramers. Interacts with RAB8A. Interacts with CEND1. Interacts with SPATA7.

The protein resides in the cytoplasm. Its subcellular location is the cytoskeleton. The protein localises to the cilium basal body. It is found in the microtubule organizing center. It localises to the centrosome. The protein resides in the centriole. Its subcellular location is the cell junction. The protein localises to the adherens junction. Functionally, involved in vesicle trafficking and required for ciliogenesis, formation of primary non-motile cilium, and recruitment of RAB8A to the basal body of primary cilium. Component of the tectonic-like complex, a complex localized at the transition zone of primary cilia and acting as a barrier that prevents diffusion of transmembrane proteins between the cilia and plasma membranes. Involved in neuronal differentiation. As a positive modulator of classical Wnt signaling, may play a crucial role in ciliary signaling during cerebellum embryonic development. This Rattus norvegicus (Rat) protein is Jouberin (Ahi1).